The sequence spans 325 residues: ATPase ASNA1 homolog 2 (325 aa).

An ATP-binding site is contributed by 22 to 29; it reads KGGVGKTT. The active site involves Asp-51. Residues Glu-231 and Asn-258 each coordinate ATP. Residues Cys-267 and Cys-270 each contribute to the Zn(2+) site.

The protein belongs to the arsA ATPase family. As to quaternary structure, homodimer.

It is found in the cytoplasm. It localises to the endoplasmic reticulum. ATPase required for the post-translational delivery of tail-anchored (TA) proteins to the endoplasmic reticulum. Recognizes and selectively binds the transmembrane domain of TA proteins in the cytosol. This complex then targets to the endoplasmic reticulum by membrane-bound receptors, where the tail-anchored protein is released for insertion. This process is regulated by ATP binding and hydrolysis. ATP binding drives the homodimer towards the closed dimer state, facilitating recognition of newly synthesized TA membrane proteins. ATP hydrolysis is required for insertion. Subsequently, the homodimer reverts towards the open dimer state, lowering its affinity for the membrane-bound receptor, and returning it to the cytosol to initiate a new round of targeting. The protein is ATPase ASNA1 homolog 2 of Paramecium tetraurelia.